We begin with the raw amino-acid sequence, 32 residues long: Apolipophorin-3 (32 aa).

The tract at residues 1–32 (DAPSTTPPQDXEKKAAEFQKTFTEQXNQLANK) is disordered. Residues 20–32 (KTFTEQXNQLANK) show a composition bias toward polar residues.

Belongs to the insect apolipophorin-3 family. Equilibrium between a soluble monomer and a bound lipoprotein form. Apolipophorin-3 associates with lipophorin during lipid loading until each particle contains 9 or 14 molecules of apolipophorin-3. In terms of tissue distribution, hemolymph.

Its subcellular location is the secreted. Its function is as follows. Assists in the loading of diacylglycerol, generated from triacylglycerol stores in the fat body through the action of adipokinetic hormone, into lipophorin, the hemolymph lipoprotein. It increases the lipid carrying capacity of lipophorin by covering the expanding hydrophobic surface resulting from diacylglycerol uptake. It thus plays a critical role in the transport of lipids during flight in several species of insects. In Diatraea grandiosella (Southwestern corn borer), this protein is Apolipophorin-3.